The primary structure comprises 377 residues: Protein MULTIPOLAR SPINDLE 1 (377 aa).

The Nuclear localization signal motif lies at 117 to 124 (LRRRFLRL).

As to expression, expressed in roots, stems, leaves, inflorescences and seedlings. Strongly expressed in meiocytes.

It localises to the nucleus. The protein resides in the cytoplasm. The protein localises to the cytoskeleton. It is found in the spindle. In terms of biological role, involved in meiotic spindle organization in meiocytes thus regulating chromosome segregation. Required for formation of meiotic DNA double-strand breaks (DSBs) during early recombination processes. This is Protein MULTIPOLAR SPINDLE 1 from Arabidopsis thaliana (Mouse-ear cress).